A 449-amino-acid chain; its full sequence is PGL/p-HBAD biosynthesis rhamnosyltransferase (449 aa).

This sequence belongs to the glycosyltransferase 28 family.

Its function is as follows. Catalyzes the transfer of the first rhamnosyl residue on p-hydroxybenzoic acid or phenolphthiocerol derivatives to form, after O-methylation at position 2 of the sugar unit, mono-O-methyl-glycosyl-p-hydroxybenzoic acid derivative (p-HBAD I) and 2-O-methyl-rhamnosyl-phenolphthiocerol dimycocerosate (also called mycoside B) during p-hydroxybenzoic acid derivatives (p-HBAD) and glycosylated phenolphthiocerol dimycocerosates (PGL) biosynthesis. This chain is PGL/p-HBAD biosynthesis rhamnosyltransferase, found in Mycobacterium bovis (strain BCG / Pasteur 1173P2).